Reading from the N-terminus, the 119-residue chain is Immunoglobulin heavy variable 3-49 (119 aa).

An N-terminal signal peptide occupies residues 1–19; the sequence is MEFGLSWVFLVAILKGVQC. Residues 20-44 form a framework-1 region; that stretch reads EVQLVESGGGLVQPGRSLRLSCTAS. An Ig-like domain is found at 20–119; the sequence is EVQLVESGGG…EDTAVYYCTR (100 aa). A disulfide bond links Cys41 and Cys117. The segment at 45–52 is complementarity-determining-1; that stretch reads GFTFGDYA. The segment at 53–69 is framework-2; it reads MSWVRQAPGKGLEWVGF. A complementarity-determining-2 region spans residues 70–79; it reads IRSKAYGGTT. Positions 80–117 are framework-3; that stretch reads EYAASVKGRFTISRDDSKSIAYLQMNSLKTEDTAVYYC. Residues 118–119 are complementarity-determining-3; the sequence is TR.

As to quaternary structure, immunoglobulins are composed of two identical heavy chains and two identical light chains; disulfide-linked.

Its subcellular location is the secreted. The protein localises to the cell membrane. In terms of biological role, v region of the variable domain of immunoglobulin heavy chains that participates in the antigen recognition. Immunoglobulins, also known as antibodies, are membrane-bound or secreted glycoproteins produced by B lymphocytes. In the recognition phase of humoral immunity, the membrane-bound immunoglobulins serve as receptors which, upon binding of a specific antigen, trigger the clonal expansion and differentiation of B lymphocytes into immunoglobulins-secreting plasma cells. Secreted immunoglobulins mediate the effector phase of humoral immunity, which results in the elimination of bound antigens. The antigen binding site is formed by the variable domain of one heavy chain, together with that of its associated light chain. Thus, each immunoglobulin has two antigen binding sites with remarkable affinity for a particular antigen. The variable domains are assembled by a process called V-(D)-J rearrangement and can then be subjected to somatic hypermutations which, after exposure to antigen and selection, allow affinity maturation for a particular antigen. This Homo sapiens (Human) protein is Immunoglobulin heavy variable 3-49.